Consider the following 539-residue polypeptide: Chaperonin GroEL (539 aa).

ATP is bound by residues threonine 29–proline 32, aspartate 86–threonine 90, glycine 413, asparagine 476–alanine 478, and aspartate 492.

This sequence belongs to the chaperonin (HSP60) family. Forms a cylinder of 14 subunits composed of two heptameric rings stacked back-to-back. Interacts with the co-chaperonin GroES.

It is found in the cytoplasm. It carries out the reaction ATP + H2O + a folded polypeptide = ADP + phosphate + an unfolded polypeptide.. Functionally, together with its co-chaperonin GroES, plays an essential role in assisting protein folding. The GroEL-GroES system forms a nano-cage that allows encapsulation of the non-native substrate proteins and provides a physical environment optimized to promote and accelerate protein folding. This chain is Chaperonin GroEL, found in Streptococcus thermophilus (strain CNRZ 1066).